We begin with the raw amino-acid sequence, 450 residues long: Divalent metal cation transporter MntH (450 aa).

11 helical membrane passes run 34–54 (LSFL…GNWI), 61–81 (AQYG…AMLL), 108–128 (IAII…IAEV), 141–161 (IPLI…LFIM), 170–190 (AIVG…VYIS), 212–232 (GILY…NLYL), 263–283 (IQLS…ASLF), 305–325 (PVLG…ALLA), 361–381 (SLAV…AAKI), 383–403 (QLLV…LIPL), and 422–442 (VNII…YLIV).

This sequence belongs to the NRAMP family.

The protein localises to the cell membrane. Functionally, h(+)-stimulated, divalent metal cation uptake system. The polypeptide is Divalent metal cation transporter MntH (Staphylococcus aureus (strain JH1)).